Reading from the N-terminus, the 296-residue chain is 4-hydroxybenzoate octaprenyltransferase (296 aa).

The next 8 membrane-spanning stretches (helical) occupy residues 28–48 (PIGI…AGKG), 52–72 (LANI…GCVI), 102–122 (ALVF…CTNA), 146–166 (YYPQ…AFTA), 169–189 (GELP…TVGY), 219–239 (VIIL…GSKF), 241–261 (LGMW…WEFW), and 275–295 (FLHN…DYAL).

It belongs to the UbiA prenyltransferase family. Mg(2+) serves as cofactor.

It localises to the cell inner membrane. The catalysed reaction is all-trans-octaprenyl diphosphate + 4-hydroxybenzoate = 4-hydroxy-3-(all-trans-octaprenyl)benzoate + diphosphate. It participates in cofactor biosynthesis; ubiquinone biosynthesis. Catalyzes the prenylation of para-hydroxybenzoate (PHB) with an all-trans polyprenyl group. Mediates the second step in the final reaction sequence of ubiquinone-8 (UQ-8) biosynthesis, which is the condensation of the polyisoprenoid side chain with PHB, generating the first membrane-bound Q intermediate 3-octaprenyl-4-hydroxybenzoate. The protein is 4-hydroxybenzoate octaprenyltransferase of Pseudomonas fluorescens (strain Pf0-1).